A 193-amino-acid chain; its full sequence is Dirigent protein 11 (193 aa).

Positions 1–33 are cleaved as a signal peptide; sequence MLQITNMATPFLLLLLPLIFSTVLLLTITVTQS. N-linked (GlcNAc...) asparagine glycans are attached at residues N78 and N136.

It belongs to the plant dirigent protein family. In terms of assembly, homodimer.

Its subcellular location is the secreted. It localises to the extracellular space. It is found in the apoplast. Functionally, dirigent proteins impart stereoselectivity on the phenoxy radical-coupling reaction, yielding optically active lignans from two molecules of coniferyl alcohol in the biosynthesis of lignans, flavonolignans, and alkaloids and thus plays a central role in plant secondary metabolism. In Arabidopsis thaliana (Mouse-ear cress), this protein is Dirigent protein 11 (DIR11).